The sequence spans 184 residues: UPF0316 protein YebE (184 aa).

A run of 3 helical transmembrane segments spans residues 9–29 (GIAM…FFTI), 41–61 (LAAG…SLVL), and 67–87 (IQNV…GMKI).

This sequence belongs to the UPF0316 family.

It is found in the cell membrane. In Bacillus subtilis (strain 168), this protein is UPF0316 protein YebE (yebE).